Here is a 297-residue protein sequence, read N- to C-terminus: Ribosome production factor 2 homolog (297 aa).

Positions K28–A232 constitute a Brix domain.

Belongs to the RPF2 family.

It localises to the nucleus. The protein resides in the nucleolus. The protein is Ribosome production factor 2 homolog of Caenorhabditis elegans.